The following is a 196-amino-acid chain: Nucleoid occlusion factor SlmA (196 aa).

An HTH tetR-type domain is found at 7 to 68 (SNRREEILQA…GLIEFIEEAL (62 aa)). Positions 31 to 50 (TTAKLAQQVGVSEAALYRHF) form a DNA-binding region, H-T-H motif. Residues 65–142 (EEALMSRINR…QLRQILRERK (78 aa)) adopt a coiled-coil conformation.

Belongs to the nucleoid occlusion factor SlmA family. As to quaternary structure, homodimer. Interacts with FtsZ.

It localises to the cytoplasm. Its subcellular location is the nucleoid. Its function is as follows. Required for nucleoid occlusion (NO) phenomenon, which prevents Z-ring formation and cell division over the nucleoid. Acts as a DNA-associated cell division inhibitor that binds simultaneously chromosomal DNA and FtsZ, and disrupts the assembly of FtsZ polymers. SlmA-DNA-binding sequences (SBS) are dispersed on non-Ter regions of the chromosome, preventing FtsZ polymerization at these regions. In Vibrio vulnificus (strain CMCP6), this protein is Nucleoid occlusion factor SlmA.